The chain runs to 199 residues: Probable thymidylate kinase (199 aa).

Position 7–14 (7–14 (GLDGSGKT)) interacts with ATP.

It belongs to the thymidylate kinase family.

It catalyses the reaction dTMP + ATP = dTDP + ADP. The polypeptide is Probable thymidylate kinase (Halobacterium salinarum (strain ATCC 29341 / DSM 671 / R1)).